The primary structure comprises 326 residues: tRNA uridine(34) hydroxylase (326 aa).

The region spanning 123 to 217 (ADPEVFVVDT…YLEEVPQEES (95 aa)) is the Rhodanese domain. The active-site Cysteine persulfide intermediate is Cys-177. The span at 278–288 (QVERFREREKQ) shows a compositional bias: basic and acidic residues. The disordered stretch occupies residues 278 to 326 (QVERFREREKQVSLANQRGEQHVGGESAKQRAQRREAKLAKKAAQRKQA). Residues 317-326 (AKKAAQRKQA) are compositionally biased toward basic residues.

Belongs to the TrhO family.

It catalyses the reaction uridine(34) in tRNA + AH2 + O2 = 5-hydroxyuridine(34) in tRNA + A + H2O. Catalyzes oxygen-dependent 5-hydroxyuridine (ho5U) modification at position 34 in tRNAs. The sequence is that of tRNA uridine(34) hydroxylase from Vibrio parahaemolyticus serotype O3:K6 (strain RIMD 2210633).